Reading from the N-terminus, the 323-residue chain is Low affinity immunoglobulin gamma Fc region receptor II-c (323 aa).

Positions 1–42 (MGILSFLPVLATESDWADCKSPQPWGHMLLWTAVLFLAPVAG) are cleaved as a signal peptide. Residues 43–223 (TPAAPPKAVL…VQAPSSSPMG (181 aa)) are Extracellular-facing. Ig-like C2-type domains are found at residues 48-127 (PKAV…VHLT) and 131-213 (EWLV…VTIT). 2 disulfide bridges follow: cysteine 71–cysteine 113 and cysteine 152–cysteine 196. N-linked (GlcNAc...) asparagine glycans are attached at residues asparagine 106, asparagine 180, and asparagine 187. Residues 224–246 (IIVAVVTGIAVAAIVAAVVALIY) form a helical membrane-spanning segment. The Cytoplasmic portion of the chain corresponds to 247–323 (CRKKRISANS…PPNDHVNSNN (77 aa)). The segment at 277–323 (KRQPEETNNDYETADGGYMTLNPRAPTDDDKNIYLTLPPNDHVNSNN) is disordered. A phosphotyrosine; by SRC-type Tyr-kinases mark is found at tyrosine 294 and tyrosine 310.

Phosphorylated by SRC-type Tyr-kinases such as LYN, BLK, FYN and SYK. In terms of tissue distribution, isoform IIC1 is detected in monocytes, macrophages, polymorphonuclear cells and natural killer cells.

Its subcellular location is the cytoplasm. It is found in the cell membrane. In terms of biological role, receptor for the Fc region of complexed immunoglobulins gamma. Low affinity receptor. Involved in a variety of effector and regulatory functions such as phagocytosis of immune complexes and modulation of antibody production by B-cells. The protein is Low affinity immunoglobulin gamma Fc region receptor II-c (FCGR2C) of Homo sapiens (Human).